A 602-amino-acid chain; its full sequence is Aspartate--tRNA(Asp/Asn) ligase (602 aa).

L-aspartate is bound at residue E170. The segment at 194–197 (QLFK) is aspartate. Position 216 (R216) interacts with L-aspartate. Residues 216-218 (RDE) and Q225 each bind ATP. H448 is an L-aspartate binding site. Residue E482 coordinates ATP. Position 489 (R489) interacts with L-aspartate. 534–537 (GWDR) contacts ATP. Residues 559 to 602 (GGVDPLTSAPAPITAQQRKESGVDAKPEPKGDAAAAKPQVSAEK) form a disordered region. Residues 575 to 589 (QRKESGVDAKPEPKG) are compositionally biased toward basic and acidic residues.

It belongs to the class-II aminoacyl-tRNA synthetase family. Type 1 subfamily. As to quaternary structure, homodimer.

The protein resides in the cytoplasm. The enzyme catalyses tRNA(Asx) + L-aspartate + ATP = L-aspartyl-tRNA(Asx) + AMP + diphosphate. Its function is as follows. Aspartyl-tRNA synthetase with relaxed tRNA specificity since it is able to aspartylate not only its cognate tRNA(Asp) but also tRNA(Asn). Reaction proceeds in two steps: L-aspartate is first activated by ATP to form Asp-AMP and then transferred to the acceptor end of tRNA(Asp/Asn). This Rhodococcus opacus (strain B4) protein is Aspartate--tRNA(Asp/Asn) ligase.